The sequence spans 470 residues: Uronate isomerase (470 aa).

It belongs to the metallo-dependent hydrolases superfamily. Uronate isomerase family.

It carries out the reaction D-glucuronate = D-fructuronate. The catalysed reaction is aldehydo-D-galacturonate = keto-D-tagaturonate. The protein operates within carbohydrate metabolism; pentose and glucuronate interconversion. The protein is Uronate isomerase of Escherichia fergusonii (strain ATCC 35469 / DSM 13698 / CCUG 18766 / IAM 14443 / JCM 21226 / LMG 7866 / NBRC 102419 / NCTC 12128 / CDC 0568-73).